We begin with the raw amino-acid sequence, 189 residues long: dCTP deaminase (189 aa).

Residues 112–117 (KSTYAR), 136–138 (TLE), glutamine 157, tyrosine 171, and glutamine 181 contribute to the dCTP site. Catalysis depends on glutamate 138, which acts as the Proton donor/acceptor.

The protein belongs to the dCTP deaminase family. Homotrimer.

The catalysed reaction is dCTP + H2O + H(+) = dUTP + NH4(+). The protein operates within pyrimidine metabolism; dUMP biosynthesis; dUMP from dCTP (dUTP route): step 1/2. Functionally, catalyzes the deamination of dCTP to dUTP. The chain is dCTP deaminase from Paraburkholderia phymatum (strain DSM 17167 / CIP 108236 / LMG 21445 / STM815) (Burkholderia phymatum).